The following is a 128-amino-acid chain: Large ribosomal subunit protein bL19 (128 aa).

The protein belongs to the bacterial ribosomal protein bL19 family.

In terms of biological role, this protein is located at the 30S-50S ribosomal subunit interface and may play a role in the structure and function of the aminoacyl-tRNA binding site. This chain is Large ribosomal subunit protein bL19, found in Mesoplasma florum (strain ATCC 33453 / NBRC 100688 / NCTC 11704 / L1) (Acholeplasma florum).